A 355-amino-acid polypeptide reads, in one-letter code: Probable dual-specificity RNA methyltransferase RlmN (355 aa).

Residues 1-20 form a disordered region; the sequence is MSATPVTQLTPSSQPQQPCS. Glutamate 107 functions as the Proton acceptor in the catalytic mechanism. The region spanning 113–341 is the Radical SAM core domain; sequence TDKRLTVCVS…VSVRYSRGLE (229 aa). The cysteines at positions 120 and 346 are disulfide-linked. [4Fe-4S] cluster-binding residues include cysteine 127, cysteine 131, and cysteine 134. Residues 174–175, serine 204, 227–229, and asparagine 303 contribute to the S-adenosyl-L-methionine site; these read GE and SLH. Cysteine 346 serves as the catalytic S-methylcysteine intermediate.

This sequence belongs to the radical SAM superfamily. RlmN family. Requires [4Fe-4S] cluster as cofactor.

Its subcellular location is the cytoplasm. It carries out the reaction adenosine(2503) in 23S rRNA + 2 reduced [2Fe-2S]-[ferredoxin] + 2 S-adenosyl-L-methionine = 2-methyladenosine(2503) in 23S rRNA + 5'-deoxyadenosine + L-methionine + 2 oxidized [2Fe-2S]-[ferredoxin] + S-adenosyl-L-homocysteine. The catalysed reaction is adenosine(37) in tRNA + 2 reduced [2Fe-2S]-[ferredoxin] + 2 S-adenosyl-L-methionine = 2-methyladenosine(37) in tRNA + 5'-deoxyadenosine + L-methionine + 2 oxidized [2Fe-2S]-[ferredoxin] + S-adenosyl-L-homocysteine. In terms of biological role, specifically methylates position 2 of adenine 2503 in 23S rRNA and position 2 of adenine 37 in tRNAs. In Nostoc sp. (strain PCC 7120 / SAG 25.82 / UTEX 2576), this protein is Probable dual-specificity RNA methyltransferase RlmN.